The sequence spans 293 residues: 4-diphosphocytidyl-2-C-methyl-D-erythritol kinase (293 aa).

Residue K10 is part of the active site. Residue 94 to 104 coordinates ATP; sequence PVSAGLAGGSS. The active site involves D136.

Belongs to the GHMP kinase family. IspE subfamily.

The catalysed reaction is 4-CDP-2-C-methyl-D-erythritol + ATP = 4-CDP-2-C-methyl-D-erythritol 2-phosphate + ADP + H(+). It participates in isoprenoid biosynthesis; isopentenyl diphosphate biosynthesis via DXP pathway; isopentenyl diphosphate from 1-deoxy-D-xylulose 5-phosphate: step 3/6. Its function is as follows. Catalyzes the phosphorylation of the position 2 hydroxy group of 4-diphosphocytidyl-2C-methyl-D-erythritol. This chain is 4-diphosphocytidyl-2-C-methyl-D-erythritol kinase, found in Listeria monocytogenes serovar 1/2a (strain ATCC BAA-679 / EGD-e).